A 184-amino-acid polypeptide reads, in one-letter code: MPVDAWIREEVEIPEGVEVTVEGYKVKVKGPKGELEREFFWPGIQIFTEDGNVVIYKDFPRRKDVAIARTFAAHIRNMIKGVTEGFTYKLKVVYSHFPISVKVQGDEVIIENFLGEKAPRKAKILPGVTVKVRGQEIIVEGIDKEAVGQTAANIEQATRITKWDRRIFQDGIYIVEKAGKPITF.

Belongs to the universal ribosomal protein uL6 family. As to quaternary structure, part of the 50S ribosomal subunit.

In terms of biological role, this protein binds to the 23S rRNA, and is important in its secondary structure. It is located near the subunit interface in the base of the L7/L12 stalk, and near the tRNA binding site of the peptidyltransferase center. The polypeptide is Large ribosomal subunit protein uL6 (Pyrococcus furiosus (strain ATCC 43587 / DSM 3638 / JCM 8422 / Vc1)).